Reading from the N-terminus, the 325-residue chain is MSIGDEVIPTVDISAWLSSTASPESKNKVVEEVRSACNKYGFFNLVGHGIPAEAREKIFGCTKKFFDLPLEEKMKISVDKSLGKSFRGYEPSLIQTHQDGLLPDTKECFITGAEIPADHPDAGKFSTGPNLWPEGLSDKEFRQPVMEYRALMLDLVSTIVRILGQGIHKAFGHPSDVLNDILINPSIPMRLLHYAPQENPDPRQFGVGDHTDFGCVSILLQQKGTKGLEVWYPPKETWIPVPVIEDAFVINMGDTMHRWTGGYYRSARHRVYITGERRYSVAFFLNGNLNLKIKPLDGSGGEASVGEHINSRLAHTLGDNAKYLR.

Positions 185-287 (PSIPMRLLHY…RYSVAFFLNG (103 aa)) constitute a Fe2OG dioxygenase domain. Fe cation is bound by residues His210, Asp212, and His269. Arg278 contacts 2-oxoglutarate.

This sequence belongs to the iron/ascorbate-dependent oxidoreductase family. Fe(2+) serves as cofactor.

The protein operates within secondary metabolite biosynthesis. Functionally, 2-oxoglutarate-dependent dioxygenase; part of the gene cluster that mediates the biosynthesis of the tropolone class of fungal maleic anhydrides. The pathway begins with the synthesis of 3-methylorcinaldehyde by the non-reducing polyketide synthase (PKS) tropA. 3-methylorcinaldehyde is the substrate for the FAD-dependent monooxygenase tropB to yield a dearomatized hydroxycyclohexadione. The 2-oxoglutarate-dependent dioxygenase tropC then performs the oxidative ring expansion to provide the first tropolone metabolite stipitaldehyde. Trop D converts stipitaldehyde into stipitacetal which is in turn converted to stipitalide by the short-chain dehydrogenase/reductase tropE. The next steps involve tropF, tropG, tropH, tropI and tropJ to form successive tropolone maleic anhydrides including stipitaldehydic, stipitatonic and stipitatic acids. This is 2-oxoglutarate-dependent dioxygenase tropC from Talaromyces stipitatus (strain ATCC 10500 / CBS 375.48 / QM 6759 / NRRL 1006) (Penicillium stipitatum).